We begin with the raw amino-acid sequence, 292 residues long: Elongation factor Ts (292 aa).

Positions 80 to 83 (TDFV) are involved in Mg(2+) ion dislocation from EF-Tu.

It belongs to the EF-Ts family.

Its subcellular location is the cytoplasm. In terms of biological role, associates with the EF-Tu.GDP complex and induces the exchange of GDP to GTP. It remains bound to the aminoacyl-tRNA.EF-Tu.GTP complex up to the GTP hydrolysis stage on the ribosome. This is Elongation factor Ts from Oenococcus oeni (strain ATCC BAA-331 / PSU-1).